A 425-amino-acid chain; its full sequence is 3-phosphoshikimate 1-carboxyvinyltransferase (425 aa).

Residues lysine 21, serine 22, and arginine 26 each contribute to the 3-phosphoshikimate site. Lysine 21 contacts phosphoenolpyruvate. Glycine 91 and arginine 119 together coordinate phosphoenolpyruvate. 3-phosphoshikimate is bound by residues serine 164, glutamine 166, aspartate 311, and lysine 338. A phosphoenolpyruvate-binding site is contributed by glutamine 166. The active-site Proton acceptor is aspartate 311. Residues arginine 342 and arginine 383 each contribute to the phosphoenolpyruvate site.

This sequence belongs to the EPSP synthase family. Monomer.

The protein localises to the cytoplasm. It catalyses the reaction 3-phosphoshikimate + phosphoenolpyruvate = 5-O-(1-carboxyvinyl)-3-phosphoshikimate + phosphate. It functions in the pathway metabolic intermediate biosynthesis; chorismate biosynthesis; chorismate from D-erythrose 4-phosphate and phosphoenolpyruvate: step 6/7. Catalyzes the transfer of the enolpyruvyl moiety of phosphoenolpyruvate (PEP) to the 5-hydroxyl of shikimate-3-phosphate (S3P) to produce enolpyruvyl shikimate-3-phosphate and inorganic phosphate. In Campylobacter fetus subsp. fetus (strain 82-40), this protein is 3-phosphoshikimate 1-carboxyvinyltransferase.